The sequence spans 138 residues: Large ribosomal subunit protein bL19 (138 aa).

It belongs to the bacterial ribosomal protein bL19 family.

Functionally, this protein is located at the 30S-50S ribosomal subunit interface and may play a role in the structure and function of the aminoacyl-tRNA binding site. The chain is Large ribosomal subunit protein bL19 from Rickettsia rickettsii (strain Iowa).